The chain runs to 209 residues: MVQERHPQRKGVCWTLRLWSTAVISMLLLSTCFIASCMVTYQFTMEKPNRRLSELHTYHSSLTCCSKGTMVSEKLWGCCPNHWKSFGSSCYLISTKENFWSISEQNYIHMGAHLVVINTETEQNYIIHQLNESLSYFLGLSDPQGNSKWQWIDNTPYPNNIKFWHPHEPNLPEEWCASIVYWNPSKWGWNDVFCDSKHNSICETKKIYL.

Residues 1–20 (MVQERHPQRKGVCWTLRLWS) are Cytoplasmic-facing. Residues 21-43 (TAVISMLLLSTCFIASCMVTYQF) traverse the membrane as a helical; Signal-anchor for type II membrane protein segment. Residues 44–209 (TMEKPNRRLS…SICETKKIYL (166 aa)) are Extracellular-facing. Cystine bridges form between C64/C78 and C79/C90. A C-type lectin domain is found at 86–203 (FGSSCYLIST…CDSKHNSICE (118 aa)). 3 residues coordinate Ca(2+): V116, N118, and E122. A glycan (N-linked (GlcNAc...) asparagine) is linked at N131. Ca(2+) is bound by residues E168, N170, and E174. Alpha-D-mannopyranose-binding positions include 168–170 (EPN), E174, W182, and 190–191 (ND). C176 and C194 form a disulfide bridge. 3 residues coordinate Ca(2+): N190, D191, and E203.

In terms of assembly, associated with FCER1G. Heterodimer with CLEC4D; this heterodimer forms a pattern recognition receptor (PRR) against fungal infection.

Its subcellular location is the cell membrane. In terms of biological role, calcium-dependent lectin that acts as a pattern recognition receptor (PRR) of the innate immune system: specifically recognizes and binds alpha-mannans on C.albicans hypheas. Binding of C.albicans alpha-mannans to this receptor complex leads to phosphorylation of the immunoreceptor tyrosine-based activation motif (ITAM) of FCER1G, triggering activation of SYK, CARD9 and NF-kappa-B, consequently driving maturation of antigen-presenting cells and shaping antigen-specific priming of T-cells toward effector T-helper 1 and T-helper 17 cell subtypes. Also recognizes, in a mannose-dependent manner, allergens from house dust mite and fungi, by promoting cysteinyl leukotriene production. Recognizes soluble elements from the eggs of Shistosoma mansoni altering adaptive immune responses. This Rattus norvegicus (Rat) protein is C-type lectin domain family 6 member A (CLEC6A).